We begin with the raw amino-acid sequence, 547 residues long: Alpha-1,3-mannosyl-glycoprotein 4-beta-N-acetylglucosaminyltransferase B (547 aa).

Residues 1–7 (MRLRNGT) are Cytoplasmic-facing. The helical; Signal-anchor for type II membrane protein transmembrane segment at 8 to 28 (FLTVLLFGLCGLISLSWYTAF) threads the bilayer. Over 29–547 (SNSKGNVVDI…LSEIFIKKAE (519 aa)) the chain is Lumenal. A coiled-coil region spans residues 36–83 (VDIYQREFLALRDRLHSAEQENLKRSKELNLVLDEIKRAIAEKQALRD). N-linked (GlcNAc...) asparagine glycans are attached at residues asparagine 85, asparagine 101, and asparagine 464.

This sequence belongs to the glycosyltransferase 54 family. A divalent metal cation is required as a cofactor. In terms of processing, N-glycosylated.

It is found in the golgi apparatus membrane. The enzyme catalyses N(4)-{beta-D-GlcNAc-(1-&gt;2)-alpha-D-Man-(1-&gt;3)-[beta-D-GlcNAc-(1-&gt;2)-alpha-D-Man-(1-&gt;6)]-beta-D-Man-(1-&gt;4)-beta-D-GlcNAc-(1-&gt;4)-beta-D-GlcNAc}-L-asparaginyl-[protein] + UDP-N-acetyl-alpha-D-glucosamine = N(4)-{beta-D-GlcNAc-(1-&gt;2)-[beta-D-GlcNAc-(1-&gt;4)]-alpha-D-Man-(1-&gt;3)-[beta-D-GlcNAc-(1-&gt;2)-alpha-D-Man-(1-&gt;6)]-beta-D-Man-(1-&gt;4)-beta-D-GlcNAc-(1-&gt;4)-beta-D-GlcNAc}-L-asparaginyl-[protein] + UDP + H(+). The catalysed reaction is an N(4)-{beta-D-GlcNAc-(1-&gt;2)-alpha-D-Man-(1-&gt;3)-[alpha-D-Man-(1-&gt;6)]-beta-D-Man-(1-&gt;4)-beta-D-GlcNAc-(1-&gt;4)-beta-D-GlcNAc}-L-asparaginyl-[protein] + UDP-N-acetyl-alpha-D-glucosamine = an N(4)-{beta-D-GlcNAc-(1-&gt;2)-[beta-D-GlcNAc-(1-&gt;4)]-alpha-D-Man-(1-&gt;3)-[alpha-D-Man-(1-&gt;6)]-beta-D-Man-(1-&gt;4)-beta-D-GlcNAc-(1-&gt;4)-beta-D-GlcNAc}-L-asparaginyl-[protein] + UDP + H(+). It catalyses the reaction an N(4)-{beta-D-GlcNAc-(1-&gt;2)-alpha-D-Man-(1-&gt;3)-[beta-D-GlcNAc-(1-&gt;2)-[beta-D-GlcNAc-(1-&gt;6)]-alpha-D-Man-(1-&gt;6)]-beta-D-Man-(1-&gt;4)-beta-D-GlcNAc-(1-&gt;4)-beta-D-GlcNAc}-L-asparaginyl-[protein] + UDP-N-acetyl-alpha-D-glucosamine = an N(4)-{beta-D-GlcNAc-(1-&gt;2)-[beta-D-GlcNAc-(1-&gt;4)]-alpha-D-Man-(1-&gt;3)-[beta-D-GlcNAc-(1-&gt;2)-[beta-D-GlcNAc-(1-&gt;6)]-alpha-D-Man-(1-&gt;6)]-beta-D-Man-(1-&gt;4)-beta-D-GlcNAc-(1-&gt;4)-beta-D-GlcNAc}-L-asparaginyl-[protein] + UDP + H(+). It carries out the reaction an N(4)-{beta-D-GlcNAc-(1-&gt;2)-alpha-D-Man-(1-&gt;3)-[beta-D-GlcNAc-(1-&gt;2)-alpha-D-Man-(1-&gt;6)]-beta-D-Man-(1-&gt;4)-beta-D-GlcNAc-(1-&gt;4)-[alpha-L-Fuc-(1-&gt;6)]-beta-D-GlcNAc}-L-asparaginyl-[protein] + UDP-N-acetyl-alpha-D-glucosamine = N(4)-{beta-D-GlcNAc-(1-&gt;2)-[beta-D-GlcNAc-(1-&gt;4)]-alpha-D-Man-(1-&gt;3)-[beta-D-GlcNAc-(1-&gt;2)-alpha-D-Man-(1-&gt;6)]-beta-D-Man-(1-&gt;4)-beta-D-GlcNAc-(1-&gt;4)-[alpha-L-Fuc-(1-&gt;6)]-beta-D-GlcNAc}-asparaginyl-[protein] + UDP + H(+). The enzyme catalyses an N(4)-{beta-D-GlcNAc-(1-&gt;2)-alpha-D-Man-(1-&gt;3)-[beta-D-Gal-(1-&gt;4)-beta-D-GlcNAc-(1-&gt;2)-alpha-D-Man-(1-&gt;6)]-beta-D-Man-(1-&gt;4)-beta-D-GlcNAc-(1-&gt;4)-beta-D-GlcNAc}-L-asparaginyl-[protein] + UDP-N-acetyl-alpha-D-glucosamine = an N(4)-{beta-D-GlcNAc-(1-&gt;2)-[beta-D-GlcNAc-(1-&gt;4)]-alpha-D-Man-(1-&gt;3)-[beta-D-Gal-(1-&gt;4)-beta-D-GlcNAc-(1-&gt;2)-alpha-D-Man-(1-&gt;6)]-beta-D-Man-(1-&gt;4)-beta-D-GlcNAc-(1-&gt;4)-beta-D-GlcNAc}-L-asparaginyl-[protein] + UDP + H(+). The catalysed reaction is N(4)-{beta-D-GlcNAc-(1-&gt;2)-alpha-D-Man-(1-&gt;3)-[alpha-D-Man-(1-&gt;3)-{alpha-D-Man-(1-&gt;6)}-alpha-D-Man-(1-&gt;6)]-beta-D-Man-(1-&gt;4)-beta-D-GlcNAc-(1-&gt;4)-beta-D-GlcNAc}-asparaginyl-[protein] + UDP-N-acetyl-alpha-D-glucosamine = N(4)-{beta-D-GlcNAc-(1-&gt;2)-[beta-D-GlcNAc-(1-&gt;4)]-alpha-D-Man-(1-&gt;3)-[alpha-D-Man-(1-&gt;3)-{alpha-D-Man-(1-&gt;6)}-alpha-D-Man-(1-&gt;6)]-beta-D-Man-(1-&gt;4)-beta-D-GlcNAc-(1-&gt;4)-beta-D-GlcNAc}-asparaginyl-[protein] + UDP + H(+). It catalyses the reaction N(4)-{beta-D-GlcNAc-(1-&gt;2)-alpha-D-Man-(1-&gt;3)-beta-D-Man-(1-&gt;4)-beta-D-GlcNAc-(1-&gt;4)-beta-D-GlcNAc}-asparaginyl-[protein] + UDP-N-acetyl-alpha-D-glucosamine = N(4)-{beta-D-GlcNAc-(1-&gt;2)-[beta-D-GlcNAc-(1-&gt;4)]-alpha-D-Man-(1-&gt;3)-beta-D-Man-(1-&gt;4)-beta-D-GlcNAc-(1-&gt;4)-beta-D-GlcNAc}-asparaginyl-[protein] + UDP + H(+). It functions in the pathway protein modification; protein glycosylation. Glycosyltransferase that catalyze the transfer of GlcNAc from UDP-GlcNAc to the GlcNAcbeta1-2Manalpha1-3 arm of the core structure of N-linked glycans through a beta1-4 linkage and participates in the production of tri- and tetra-antennary N-linked sugar chains. Prefers complex-type N-glycans over hybrid-types. Has lower affinities for donors or acceptors than MGAT4A, suggesting that, under physiological conditions, it is not the main contributor in N-glycan biosynthesis. The polypeptide is Alpha-1,3-mannosyl-glycoprotein 4-beta-N-acetylglucosaminyltransferase B (mgat4bQ9UQ53) (Danio rerio (Zebrafish)).